A 216-amino-acid chain; its full sequence is RNA chaperone ProQ (216 aa).

The segment covering 105–115 (ESKAKVAEKRK) has biased composition (basic and acidic residues). Residues 105–159 (ESKAKVAEKRKAQNAAKPGAKKSYKSKTVPAFKSSPKGTNQDNVKPKAKLPPPEK) are disordered.

The protein belongs to the ProQ family.

It localises to the cytoplasm. In terms of biological role, RNA chaperone with significant RNA binding, RNA strand exchange and RNA duplexing activities. The chain is RNA chaperone ProQ from Pseudoalteromonas atlantica (strain T6c / ATCC BAA-1087).